The chain runs to 370 residues: Fe(2+) transport protein 2 (370 aa).

A signal peptide spans 1–25 (MMMSSSQTPVRIAFVFLVILAATDA). The Extracellular segment spans residues 26 to 55 (HSDHRTPPPACGGAAVGGECHSVARALRLK). Residues 56-76 (LIAIPAILAASVAGVCLPLFA) traverse the membrane as a helical segment. Residues 77–85 (RSVPALRPD) are Cytoplasmic-facing. Residues 86-106 (GGLFAVVKAFASGVILGTGYM) traverse the membrane as a helical segment. Over 107–130 (HVLPDSFNDLTSPCLPRKPWSEFP) the chain is Extracellular. Residues 131–151 (FAAFVAMLAAVFTLMVDSLML) traverse the membrane as a helical segment. Topologically, residues 152–215 (TFHTRGSKGR…TTKAQLLRNR (64 aa)) are cytoplasmic. A helical transmembrane segment spans residues 216 to 236 (VIVQVLEMGIVVHSVVIGLGM). Topologically, residues 237 to 247 (GASQNVCTIRP) are extracellular. The chain crosses the membrane as a helical span at residues 248–268 (LVAALCFHQMFEGMGLGGCIL). Over 269-278 (QAGYGGRTRS) the chain is Cytoplasmic. Residues 279 to 299 (ALVFFFSTTTPFGIALGLALT) traverse the membrane as a helical segment. The Extracellular portion of the chain corresponds to 300-309 (RVYSDSSPTA). Residues 310 to 330 (LVVVGLLNAASAGLLHYMALV) traverse the membrane as a helical segment. Over 331–349 (ELLAADFMGPKLQGNVRLQ) the chain is Cytoplasmic. The helical transmembrane segment at 350-370 (LAASLAILLGAGGMSVMAKWA) threads the bilayer.

This sequence belongs to the ZIP transporter (TC 2.A.5) family.

It localises to the cell membrane. In terms of biological role, iron transporter that may play a role in the uptake of iron from the rhizosphere across the plasma membrane in the root epidermal layer. The chain is Fe(2+) transport protein 2 (IRT2) from Oryza sativa subsp. japonica (Rice).